The primary structure comprises 483 residues: Centrosomal protein cep57l1 (483 aa).

The stretch at 94 to 228 forms a coiled coil; the sequence is EHKKVLESEK…AQVQTSLEVN (135 aa). Disordered stretches follow at residues 237–261, 303–325, and 416–460; these read AQNS…SKEP, PQVS…GGSR, and KEQP…SKAS. Residues 243–252 show a composition bias toward basic residues; sequence RKVKKKKQSK. A coiled-coil region spans residues 375-418; sequence EDLERELDYVVKQMEIKSDQIMKLKRHQLNVNKLKKTAKLLKEQ. Positions 420–435 are enriched in polar residues; sequence RPTSVTKLAADKQNTG.

Belongs to the translokin family. As to quaternary structure, interacts with clip1, mis12, ndc80 and zwint. Interacts with gamma-tubulin.

The protein resides in the cytoplasm. It localises to the cytoskeleton. The protein localises to the microtubule organizing center. Its subcellular location is the centrosome. It is found in the chromosome. The protein resides in the centromere. It localises to the kinetochore. The protein localises to the spindle. In terms of biological role, required for spindle microtubule attachment to both kinetochores and centrosomes. Also functions to tether minus-ends of spindle microtubules to centrosomes. May act by forming ring-like structures around microtubules, or by serving as a cross-linker or scaffold at the attachment site. In Xenopus tropicalis (Western clawed frog), this protein is Centrosomal protein cep57l1 (cep57l1).